The chain runs to 282 residues: Bifunctional protein FolD (282 aa).

NADP(+) contacts are provided by residues 165 to 167 (NRS), Ser-190, and Ile-231.

The protein belongs to the tetrahydrofolate dehydrogenase/cyclohydrolase family. In terms of assembly, homodimer.

The enzyme catalyses (6R)-5,10-methylene-5,6,7,8-tetrahydrofolate + NADP(+) = (6R)-5,10-methenyltetrahydrofolate + NADPH. It catalyses the reaction (6R)-5,10-methenyltetrahydrofolate + H2O = (6R)-10-formyltetrahydrofolate + H(+). It functions in the pathway one-carbon metabolism; tetrahydrofolate interconversion. Its function is as follows. Catalyzes the oxidation of 5,10-methylenetetrahydrofolate to 5,10-methenyltetrahydrofolate and then the hydrolysis of 5,10-methenyltetrahydrofolate to 10-formyltetrahydrofolate. The polypeptide is Bifunctional protein FolD (Clostridium botulinum (strain Kyoto / Type A2)).